Consider the following 248-residue polypeptide: UPF0246 protein RAF_ORF0648 (248 aa).

This sequence belongs to the UPF0246 family.

This is UPF0246 protein RAF_ORF0648 from Rickettsia africae (strain ESF-5).